A 265-amino-acid chain; its full sequence is MASSRDRAYVTVYSPTLLTWVYDYYVLGFNLRYIWGCPTDAVLLPFFAENFSRRHLDVGVATGYLPARVLASPWRRAAAHRQHLTLLDINANSLRASDARVRAAAPGIETTCVEADVVADLPPVLASVVEEERARVEKAGGEAGSSSRSCLYDSISMFNLFHCVPGGPAKLRAISTYKALLADHGVLSGCTVLGERHATGWFSRWYLRLYNRKGIFNNINDTREEFEEVLNKEFEEVDTWMFGMVLLFRASKPRREGSGYVDLLA.

This sequence belongs to the methyltransferase superfamily.

The enzyme catalyses desmethylnectriapyrone + S-adenosyl-L-methionine = nectriapyrone + S-adenosyl-L-homocysteine + H(+). O-methyltransferase; part of the gene cluster that mediates the biosynthesis of nectriapyrone and its analogs phomopyrone A, acropyrone and zaepyrone. The nectriapyrone biosynthetic gene cluster consists of two genes, the highly reducing polyketide synthase NEC1 that produces a demethylated analog of nectriapyrone from one unit of acetyl-CoA and one unit of malonyl-CoA; and the O-methyltransferase NEC2 that further methylates the NEC1 product to yield nectriapyrone. Nectriapyrone is further hydrolyzed to nectriapyrone D, also known as gulypyrone B, by an unidentified hydrolase localized outside the nectriapyrone cluster. This is O-methyltransferase NEC2 from Pyricularia oryzae (strain 70-15 / ATCC MYA-4617 / FGSC 8958) (Rice blast fungus).